The following is a 529-amino-acid chain: Ribonuclease Y (529 aa).

A helical membrane pass occupies residues 4 to 24; the sequence is GLIYISLEVLVACLITALVMY. In terms of domain architecture, KH spans 216-297; it reads LTTRIALPCS…NRIEEVYHRV (82 aa). In terms of domain architecture, HD spans 342 to 435; it reads ALQHSKEVAL…VCAADALSAG (94 aa).

It belongs to the RNase Y family.

The protein localises to the cell membrane. In terms of biological role, endoribonuclease that initiates mRNA decay. This Helicobacter pylori (strain ATCC 700392 / 26695) (Campylobacter pylori) protein is Ribonuclease Y.